A 459-amino-acid chain; its full sequence is Cysteine--tRNA ligase (459 aa).

Cys28 serves as a coordination point for Zn(2+). The short motif at 30 to 40 (VTIYDLCHIGH) is the 'HIGH' region element. Zn(2+) contacts are provided by Cys209, His234, and Glu238. The short motif at 266–270 (KMSKS) is the 'KMSKS' region element. Lys269 lines the ATP pocket.

It belongs to the class-I aminoacyl-tRNA synthetase family. As to quaternary structure, monomer. It depends on Zn(2+) as a cofactor.

The protein resides in the cytoplasm. It carries out the reaction tRNA(Cys) + L-cysteine + ATP = L-cysteinyl-tRNA(Cys) + AMP + diphosphate. In Shewanella pealeana (strain ATCC 700345 / ANG-SQ1), this protein is Cysteine--tRNA ligase.